Consider the following 428-residue polypeptide: Tyrosine--tRNA ligase (428 aa).

Y41 serves as a coordination point for L-tyrosine. The 'HIGH' region motif lies at 46 to 55 (PTADSLHLGH). 2 residues coordinate L-tyrosine: Y179 and Q183. Residues 239–243 (KFGKT) carry the 'KMSKS' region motif. K242 provides a ligand contact to ATP. Residues 361 to 418 (ADLMQALVDSELQPSRGQARKTIASNAVTINGEKQSDPEYFFQDSDILFGRYTLLRRG) enclose the S4 RNA-binding domain.

The protein belongs to the class-I aminoacyl-tRNA synthetase family. TyrS type 1 subfamily. As to quaternary structure, homodimer.

The protein localises to the cytoplasm. The catalysed reaction is tRNA(Tyr) + L-tyrosine + ATP = L-tyrosyl-tRNA(Tyr) + AMP + diphosphate + H(+). Its function is as follows. Catalyzes the attachment of tyrosine to tRNA(Tyr) in a two-step reaction: tyrosine is first activated by ATP to form Tyr-AMP and then transferred to the acceptor end of tRNA(Tyr). The protein is Tyrosine--tRNA ligase of Citrobacter koseri (strain ATCC BAA-895 / CDC 4225-83 / SGSC4696).